The primary structure comprises 159 residues: 6,7-dimethyl-8-ribityllumazine synthase (159 aa).

5-amino-6-(D-ribitylamino)uracil contacts are provided by residues W28, 59-61 (ALE), and 81-83 (CVI). Residue 86-87 (GT) coordinates (2S)-2-hydroxy-3-oxobutyl phosphate. H89 serves as the catalytic Proton donor. A 5-amino-6-(D-ribitylamino)uracil-binding site is contributed by N114. Position 128 (R128) interacts with (2S)-2-hydroxy-3-oxobutyl phosphate.

It belongs to the DMRL synthase family.

The enzyme catalyses (2S)-2-hydroxy-3-oxobutyl phosphate + 5-amino-6-(D-ribitylamino)uracil = 6,7-dimethyl-8-(1-D-ribityl)lumazine + phosphate + 2 H2O + H(+). It participates in cofactor biosynthesis; riboflavin biosynthesis; riboflavin from 2-hydroxy-3-oxobutyl phosphate and 5-amino-6-(D-ribitylamino)uracil: step 1/2. Catalyzes the formation of 6,7-dimethyl-8-ribityllumazine by condensation of 5-amino-6-(D-ribitylamino)uracil with 3,4-dihydroxy-2-butanone 4-phosphate. This is the penultimate step in the biosynthesis of riboflavin. The chain is 6,7-dimethyl-8-ribityllumazine synthase from Corynebacterium kroppenstedtii (strain DSM 44385 / JCM 11950 / CIP 105744 / CCUG 35717).